Reading from the N-terminus, the 152-residue chain is Ribonuclease pancreatic beta-type (152 aa).

The signal sequence occupies residues 1–25 (MGLEKSFILFSLLVLVLGWVQPSLG). Residues 31–45 (SSADKFKRQHMDPES) are compositionally biased toward basic and acidic residues. Residues 31-53 (SSADKFKRQHMDPESPSKSSPTY) form a disordered region. Lys35 and Arg38 together coordinate substrate. The active-site Proton acceptor is the His40. 4 disulfides stabilise this stretch: Cys54–Cys112, Cys68–Cys123, Cys86–Cys138, and Cys93–Cys100. Residues 69–73 (KPVNT), Lys94, and Arg113 each bind substrate. The Proton donor role is filled by His147.

The protein belongs to the pancreatic ribonuclease family. As to quaternary structure, monomer.

The protein localises to the secreted. The catalysed reaction is an [RNA] containing cytidine + H2O = an [RNA]-3'-cytidine-3'-phosphate + a 5'-hydroxy-ribonucleotide-3'-[RNA].. It catalyses the reaction an [RNA] containing uridine + H2O = an [RNA]-3'-uridine-3'-phosphate + a 5'-hydroxy-ribonucleotide-3'-[RNA].. Its function is as follows. Endonuclease that catalyzes the cleavage of RNA on the 3' side of pyrimidine nucleotides. Acts on single-stranded and double-stranded RNA. In Rattus exulans (Polynesian rat), this protein is Ribonuclease pancreatic beta-type.